The following is a 560-amino-acid chain: 2-hydroxyacyl-CoA lyase (560 aa).

Glutamate 49 is a binding site for thiamine diphosphate. Positions 446 and 473 each coordinate Mg(2+). The Peroxisomal target signal 1 (PTS1) signature appears at 558–560 (PRL).

Belongs to the TPP enzyme family. Mg(2+) is required as a cofactor. Thiamine diphosphate serves as cofactor.

It localises to the cytoplasm. Its subcellular location is the peroxisome matrix. The catalysed reaction is an (R)-2-hydroxy-long-chain-fatty acyl-CoA = a long-chain fatty aldehyde + formyl-CoA. It carries out the reaction a 2-hydroxy-3-methyl fatty acyl-CoA = a 2-methyl-branched fatty aldehyde + formyl-CoA. Catalyzes a carbon-carbon cleavage reaction; cleaves a 2-hydroxy-3-methylacyl-CoA into formyl-CoA and a 2-methyl-branched fatty aldehyde. In Saccharomyces cerevisiae (strain ATCC 204508 / S288c) (Baker's yeast), this protein is 2-hydroxyacyl-CoA lyase.